The primary structure comprises 334 residues: Fructose-1,6-bisphosphatase class 1 (334 aa).

Mg(2+)-binding residues include Glu91, Asp113, Leu115, and Asp116. Residues 116-119 (DGSS), Asn208, and Lys274 contribute to the substrate site. Glu280 contacts Mg(2+).

Belongs to the FBPase class 1 family. As to quaternary structure, homotetramer. It depends on Mg(2+) as a cofactor.

The protein resides in the cytoplasm. The enzyme catalyses beta-D-fructose 1,6-bisphosphate + H2O = beta-D-fructose 6-phosphate + phosphate. It participates in carbohydrate biosynthesis; gluconeogenesis. The protein is Fructose-1,6-bisphosphatase class 1 of Herminiimonas arsenicoxydans.